Here is a 374-residue protein sequence, read N- to C-terminus: Beta-1,3-N-acetylglucosaminyltransferase lunatic fringe (374 aa).

At 1 to 8 (MLKTYRGK) the chain is on the cytoplasmic side. The helical; Signal-anchor for type II membrane protein transmembrane segment at 9–29 (VVVSLAGATVTCLGFLLFLSQ) threads the bilayer. The Lumenal segment spans residues 30–374 (HQRIQADGMQ…TPWCPPQVAY (345 aa)). N-linked (GlcNAc...) asparagine glycosylation is present at Asn-40. The disordered stretch occupies residues 80–100 (RSRREADKPSEAPGAATDAPP). Arg-123 contributes to the substrate binding site. N-linked (GlcNAc...) asparagine glycosylation is present at Asn-162. Intrachain disulfides connect Cys-163–Cys-174 and Cys-192–Cys-255. Residue Asp-196 participates in substrate binding. Asp-197 contacts Mn(2+). The active site involves Asp-285. His-309 serves as a coordination point for Mn(2+). Cysteines 359 and 368 form a disulfide.

This sequence belongs to the glycosyltransferase 31 family. Requires Mn(2+) as cofactor. The cofactor is Co(2+). Post-translationally, a soluble form may be derived from the membrane form by proteolytic processing. In terms of tissue distribution, in the embryo, expressed along the A-P axis of the neural tube, within the lateral plate mesoderm, in the presomitic mesoderm and the somites, in specific rhombomeres of the hindbrain (even-numbered rhombomeres) and in the otic vesicles.

The protein resides in the golgi apparatus membrane. The enzyme catalyses 3-O-(alpha-L-fucosyl)-L-threonyl-[EGF-like domain protein] + UDP-N-acetyl-alpha-D-glucosamine = 3-O-(N-acetyl-beta-D-glucosaminyl-(1-&gt;3)-alpha-L-fucosyl)-L-threonyl-[EGF-like domain protein] + UDP + H(+). It carries out the reaction 3-O-(alpha-L-fucosyl)-L-seryl-[EGF-like domain protein] + UDP-N-acetyl-alpha-D-glucosamine = 3-O-(N-acetyl-beta-D-glucosaminyl-(1-&gt;3)-alpha-L-fucosyl)-L-seryl-[EGF-like domain protein] + UDP + H(+). In terms of biological role, glycosyltransferase that initiates the elongation of O-linked fucose residues attached to EGF-like repeats in the extracellular domain of Notch molecules. Involved in the correct formation of boundaries in the somites and hindbrain. Required for Delta-Notch-mediated induction of hypochord cells at the lateral borders of the midline precursor domain. This Danio rerio (Zebrafish) protein is Beta-1,3-N-acetylglucosaminyltransferase lunatic fringe (lfng).